The chain runs to 419 residues: Adenylosuccinate synthetase (419 aa).

GTP is bound by residues 11 to 17 (GDEGKGK) and 39 to 41 (GHT). Aspartate 12 acts as the Proton acceptor in catalysis. The Mg(2+) site is built by aspartate 12 and glycine 39. IMP-binding positions include 12–15 (DEGK), 37–40 (NAGH), threonine 129, arginine 143, asparagine 218, threonine 233, and arginine 297. Histidine 40 functions as the Proton donor in the catalytic mechanism. 293–299 (VTTGRKR) is a substrate binding site. GTP is bound by residues arginine 299, 325-327 (KLD), and 407-409 (GTG).

This sequence belongs to the adenylosuccinate synthetase family. Homodimer. Requires Mg(2+) as cofactor.

It is found in the cytoplasm. It carries out the reaction IMP + L-aspartate + GTP = N(6)-(1,2-dicarboxyethyl)-AMP + GDP + phosphate + 2 H(+). The protein operates within purine metabolism; AMP biosynthesis via de novo pathway; AMP from IMP: step 1/2. Its function is as follows. Plays an important role in the de novo pathway and in the salvage pathway of purine nucleotide biosynthesis. Catalyzes the first committed step in the biosynthesis of AMP from IMP. The polypeptide is Adenylosuccinate synthetase (Coccidioides posadasii (strain C735) (Valley fever fungus)).